We begin with the raw amino-acid sequence, 399 residues long: Protein HYM1 (399 aa).

Low complexity predominate over residues 363–382 (VSNNNASSSNVASITSPSSV). Residues 363–399 (VSNNNASSSNVASITSPSSVMNNQSSILTHSTSPDSR) form a disordered region. The span at 383-399 (MNNQSSILTHSTSPDSR) shows a compositional bias: polar residues.

It belongs to the Mo25 family.

The protein is Protein HYM1 (HYM1) of Saccharomyces cerevisiae (strain ATCC 204508 / S288c) (Baker's yeast).